The sequence spans 61 residues: LKCHNKLVPFLSKTCPEGKNLCYKMTLMKMPKIPIKRGCTDACPKSSLLVKVVCCNKDKCN.

Intrachain disulfides connect C3–C22, C15–C39, C43–C54, and C55–C60.

The protein belongs to the three-finger toxin family. Short-chain subfamily. Type IB cytotoxin sub-subfamily. Expressed by the venom gland.

It localises to the secreted. Functionally, this protein lyses red blood cells and has cardiotoxic and hypotensive activities. In Hemachatus haemachatus (Rinkhals), this protein is Three-finger hemachatoxin.